The chain runs to 418 residues: MEYNPFHNGHLYHLTSARELVRPDYTIAVMSGNFCQRGEPAVIDKFARAEIALRMGIDVVLELPVVFATQDAGGFAFGAVSVLDATGVVTDVVFGSESNDIGFLQRVAQILYEQPDEYQKFLHEELKKGYSFPNARKYALMRYFSMKGWNEEEVLRLEKSNDILGVEYIHSALKIGSNIRFHTIKRVGAEEKDTSFRGRFSSATAIRNLIREERWEEVRDSLPEDSFEILMREINEGRGPVFLENMGDFLLSFFRLKNMEFFERIHGFSEGLEKRFHICARQTGSYQDFLECVKAKRFTFSRIRRLALFSVFEVNKEFVEKSNAKGPQYIRILGFTEKGRKILSLMRKKAKLPIVTNMSLYRKVLEKTDLPVDKQLFFEQIDLDVRTTNFYSMFFPAVEQRCGERDFSIHPIFLRTET.

Residues Gly95, Asn161, and Arg186 each coordinate ATP.

The protein belongs to the TmcAL family.

Its subcellular location is the cytoplasm. The catalysed reaction is cytidine(34) in elongator tRNA(Met) + acetate + ATP = N(4)-acetylcytidine(34) in elongator tRNA(Met) + AMP + diphosphate. Functionally, catalyzes the formation of N(4)-acetylcytidine (ac(4)C) at the wobble position of elongator tRNA(Met), using acetate and ATP as substrates. First activates an acetate ion to form acetyladenylate (Ac-AMP) and then transfers the acetyl group to tRNA to form ac(4)C34. The protein is tRNA(Met) cytidine acetate ligase of Thermotoga petrophila (strain ATCC BAA-488 / DSM 13995 / JCM 10881 / RKU-1).